A 76-amino-acid polypeptide reads, in one-letter code: Envelope small membrane protein (76 aa).

Residues 1–14 (MLQLVNDNGLVVNV) lie on the Virion surface side of the membrane. A helical transmembrane segment spans residues 15 to 35 (ILWLFVLFFLLIISITFVQLV). Topologically, residues 36–76 (NLCFTCHRLCNSAVYTPIGRLYRVYKSYMRIDPLPSTVIDV) are intravirion.

Belongs to the alphacoronaviruses E protein family. In terms of assembly, homopentamer. Interacts with membrane protein M in the budding compartment of the host cell, which is located between endoplasmic reticulum and the Golgi complex. Interacts with Nucleoprotein. Interacts with host IRF3; this interaction inhibits type I IFN production.

It is found in the host Golgi apparatus membrane. Its subcellular location is the host endoplasmic reticulum. Plays a central role in virus morphogenesis and assembly. Acts as a viroporin and self-assembles in host membranes forming pentameric protein-lipid pores that allow ion transport. Also plays a role in the induction of apoptosis. Counteracts the production of type I interferon by interacting with host IRF3 component and preventing its translocation to the host nucleus. The polypeptide is Envelope small membrane protein (Sus scrofa (Pig)).